Reading from the N-terminus, the 480-residue chain is Proline--tRNA ligase (480 aa).

The protein belongs to the class-II aminoacyl-tRNA synthetase family. ProS type 3 subfamily. In terms of assembly, homodimer.

Its subcellular location is the cytoplasm. It catalyses the reaction tRNA(Pro) + L-proline + ATP = L-prolyl-tRNA(Pro) + AMP + diphosphate. Catalyzes the attachment of proline to tRNA(Pro) in a two-step reaction: proline is first activated by ATP to form Pro-AMP and then transferred to the acceptor end of tRNA(Pro). The chain is Proline--tRNA ligase from Mycobacterium leprae (strain Br4923).